The following is a 168-amino-acid chain: Inorganic pyrophosphatase (168 aa).

Lys23, Arg37, and Tyr49 together coordinate substrate. Mg(2+)-binding residues include Asp59, Asp64, and Asp96. Substrate is bound at residue Tyr133.

This sequence belongs to the PPase family. As to quaternary structure, homohexamer. It depends on Mg(2+) as a cofactor.

It is found in the cytoplasm. It catalyses the reaction diphosphate + H2O = 2 phosphate + H(+). Its function is as follows. Catalyzes the hydrolysis of inorganic pyrophosphate (PPi) forming two phosphate ions. In Methanosarcina acetivorans (strain ATCC 35395 / DSM 2834 / JCM 12185 / C2A), this protein is Inorganic pyrophosphatase.